Here is a 786-residue protein sequence, read N- to C-terminus: Endonuclease MutS2 (786 aa).

333-340 (GPNTGGKT) provides a ligand contact to ATP. The Smr domain occupies 711-786 (LDLRGERYDQ…GSGATIVNFK (76 aa)).

The protein belongs to the DNA mismatch repair MutS family. MutS2 subfamily. Homodimer. Binds to stalled ribosomes, contacting rRNA.

In terms of biological role, endonuclease that is involved in the suppression of homologous recombination and thus may have a key role in the control of bacterial genetic diversity. Its function is as follows. Acts as a ribosome collision sensor, splitting the ribosome into its 2 subunits. Detects stalled/collided 70S ribosomes which it binds and splits by an ATP-hydrolysis driven conformational change. Acts upstream of the ribosome quality control system (RQC), a ribosome-associated complex that mediates the extraction of incompletely synthesized nascent chains from stalled ribosomes and their subsequent degradation. Probably generates substrates for RQC. The polypeptide is Endonuclease MutS2 (Lacticaseibacillus paracasei (strain ATCC 334 / BCRC 17002 / CCUG 31169 / CIP 107868 / KCTC 3260 / NRRL B-441) (Lactobacillus paracasei)).